The following is a 229-amino-acid chain: MSAEAMNMNMNQDAVFIPPPEGEQYERKEKQEIQQTSYLQSQVKVPLVNLPAPFFSTSFSAQEILGEGFQASISRISAVSEELSSIEIPELAEEARRDFAAKTREQEMLSANYQKEVERKTEAYRKQQEVEADKIRKELEKQHLRDVEFRKDIVEMAIENQKKMIDVESRYAKKDMDRERVKVRMMLEQQKFHSDIQVNLDSSAAGTETGGQVVSESQKFTERNRQIKQ.

The interval 1–29 (MSAEAMNMNMNQDAVFIPPPEGEQYERKE) is disordered. Residues 109–145 (LSANYQKEVERKTEAYRKQQEVEADKIRKELEKQHLR) adopt a coiled-coil conformation. CAHS motif regions lie at residues 124-142 (YRKQ…LEKQ) and 161-179 (QKKM…MDRE). Positions 202–218 (SSAAGTETGGQVVSESQ) are enriched in polar residues. The disordered stretch occupies residues 202-229 (SSAAGTETGGQVVSESQKFTERNRQIKQ). The span at 219–229 (KFTERNRQIKQ) shows a compositional bias: basic and acidic residues.

The protein belongs to the Cytosolic-abundant heat soluble protein (CAHS) family.

The protein resides in the cytoplasm. CAHS proteins are cytosolic heat soluble proteins that seem to contribute to the anhydrobiosis in tardigrades, but their specific mechanisms are yet to be identified. It is possible that protection during anhydrobiosis might occur via the stabilization of vitrifying small molecules such as sugars, but not via the direct glass transition of CAHS proteins themselves. In Paramacrobiotus richtersi (Water bear), this protein is Cytosolic-abundant heat soluble protein 107838.